The following is a 560-amino-acid chain: MAKIISFDEESRRALERGVNALADAVKITLGPKGRNVLLEKKYGTPQIVNDGITVAKEIELEDPLENTGARLIQEVAAKTKDVAGDGTTTATVLVQALIKEGLKNVAAGSNPVSLKRGIDKTTEALVAEIAKVAKPVEGSAIAQVATVSAGNDEEVGAMIAQAVEKVTKDGVITVEESKSLTTELDVVEGMQIDRGYISPYFITNNERQTVELENVRILITDKKISSIQELVPVLEKVARLGQPLLIIAEDVEGDALATLVVNKARGVLSVAAIKAPGFGERRKALLQDIAILTDGQLISEEIGLSLDTASLEALGTAQKITIEKDNTTIVAGNTTKPEIQKRIAQIRRQLEETDSEYDSEKLQERIAKLAGGIAVIKVGAATETELKDRKLRIEDALNATKAAVAEGIVPGGGKTLIYLASKVDEIKKNFDEEEKIGADIVKRALEAPLRQIADNAGVEGSVIVSRVKDSDFNTGYNAATGEFEDLIAAGIIDPAKVVRSALQNAASIAGLVLTTEAIVVEKPEKKAAAPADAGMGGMGGMGGMGGMGGMGGMGGMGMF.

Residues 29–32 (TLGP), 86–90 (DGTTT), Gly-413, 478–480 (NAA), and Asp-494 contribute to the ATP site.

This sequence belongs to the chaperonin (HSP60) family. In terms of assembly, forms a cylinder of 14 subunits composed of two heptameric rings stacked back-to-back. Interacts with the co-chaperonin GroES.

The protein resides in the cytoplasm. The catalysed reaction is ATP + H2O + a folded polypeptide = ADP + phosphate + an unfolded polypeptide.. Its function is as follows. Together with its co-chaperonin GroES, plays an essential role in assisting protein folding. The GroEL-GroES system forms a nano-cage that allows encapsulation of the non-native substrate proteins and provides a physical environment optimized to promote and accelerate protein folding. The sequence is that of Chaperonin GroEL 2 from Trichormus variabilis (strain ATCC 29413 / PCC 7937) (Anabaena variabilis).